We begin with the raw amino-acid sequence, 142 residues long: Small ribosomal subunit protein uS12y (142 aa).

A Hydroxyproline modification is found at Pro61.

It belongs to the universal ribosomal protein uS12 family.

The polypeptide is Small ribosomal subunit protein uS12y (RPS23B) (Arabidopsis thaliana (Mouse-ear cress)).